A 664-amino-acid chain; its full sequence is MAGLGGEPIPDGEFTAVVYRLIRDARYAEAVQLLGGELQRSPRSRAGLSLLGYCYYRLQEFALAAECYEQLRQLHPELEQYRLYQAQALYKACLYPEATRVSFLLLDNPTYHNRVLRLQAAIKYSEGDLPGARSLVEQLLSEGGEDSGGENELDGQVNLGCLLYKEGHYEAACSKFSAALQASGYRPDLSYNLALAYFSSRQYASALKHIVEIIEHGIRQHPELGVGMTTEGIDVRSVGNTLVLHQTALVEAFNLKAAIEYQLRNYEAAQETLTDMPPRAEEELDPVTLHNQALMNMDARPTEGFEKLQFLLQQIPFPPETFGNLLLLYCKYEYFDLAADVLAENAHLTYKFLTPYLYDFLDAMITCQTAPEEAFVKLDGLAGMLTEQLRRLTKQVQEARHNKDDEAIKKAENEYDDTLEKYIPVLMAQAKIYWNLENYPMVEKIFRKSVEFCNDHDVWKLNVAHVLFMQENKYKEAIGFYEPIVKKHYDNILKVSAIVLANLCVSYIMTSQNEEAEELMRKIEKEEEQLSYDDPDKKIYHFCIVNLVIGTLYCAKGNYDFGISRVIKSLEPYNKKLGTDTWYYAKRCFLSLLENMSKHMIVLRDSVIQECVQFLEHCELYGRNIPAVIEQPLEEERMHTGKNTVTYESRELKALIYEIIDWNM.

TPR repeat units lie at residues 11–44 (DGEF…SPRS), 45–78 (RAGL…HPEL), 153–186 (LDGQ…SGYR), 188–220 (DLSY…GIRQ), 392–423 (LTKQ…EKYI), 424–456 (PVLM…CNDH), and 458–491 (VWKL…HYDN). The stretch at 507-534 (YIMTSQNEEAEELMRKIEKEEEQLSYDD) forms a coiled coil. A TPR 8 repeat occupies 543 to 576 (CIVNLVIGTLYCAKGNYDFGISRVIKSLEPYNKK).

The protein belongs to the TTC30/dfy-1/fleer family.

Its subcellular location is the cell projection. It is found in the cilium. Its function is as follows. Required for polyglutamylation of axonemal tubulin. Plays a role in anterograde intraflagellar transport (IFT), the process by which cilia precursors are transported from the base of the cilium to the site of their incorporation at the tip. The protein is Intraflagellar transport protein 70A (IFT70A) of Bos taurus (Bovine).